Here is a 300-residue protein sequence, read N- to C-terminus: GTPase Era (300 aa).

The Era-type G domain maps to 5–176 (RSGFVCLIGR…IDVLAAALPP (172 aa)). A G1 region spans residues 13-20 (GRPNTGKS). 13–20 (GRPNTGKS) is a binding site for GTP. A G2 region spans residues 39 to 43 (QTTRH). Residues 61–64 (DTPG) are G3. GTP contacts are provided by residues 61-65 (DTPGL) and 125-128 (TKID). Residues 125–128 (TKID) form a G4 region. The interval 155-157 (VSA) is G5. Residues 207-286 (VHDELPHSLA…YLDLHVNVAK (80 aa)) form the KH type-2 domain.

Belongs to the TRAFAC class TrmE-Era-EngA-EngB-Septin-like GTPase superfamily. Era GTPase family. Monomer.

It is found in the cell envelope. It localises to the secreted. The protein localises to the cell wall. Exhibits GTPase activity. Binds RNA but is probably not involved in ribosome assembly in mycobacteria. This is GTPase Era from Mycobacterium leprae (strain TN).